The sequence spans 70 residues: DNA-directed RNA polymerase subunit omega (70 aa).

It belongs to the RNA polymerase subunit omega family. In terms of assembly, the RNAP catalytic core consists of 2 alpha, 1 beta, 1 beta' and 1 omega subunit. When a sigma factor is associated with the core the holoenzyme is formed, which can initiate transcription.

The catalysed reaction is RNA(n) + a ribonucleoside 5'-triphosphate = RNA(n+1) + diphosphate. In terms of biological role, promotes RNA polymerase assembly. Latches the N- and C-terminal regions of the beta' subunit thereby facilitating its interaction with the beta and alpha subunits. The sequence is that of DNA-directed RNA polymerase subunit omega from Marinobacter nauticus (strain ATCC 700491 / DSM 11845 / VT8) (Marinobacter aquaeolei).